The chain runs to 309 residues: Probable manganese-dependent inorganic pyrophosphatase (309 aa).

Mn(2+) contacts are provided by histidine 9, aspartate 13, aspartate 15, aspartate 75, histidine 97, and aspartate 149.

Belongs to the PPase class C family. Mn(2+) is required as a cofactor.

Its subcellular location is the cytoplasm. It catalyses the reaction diphosphate + H2O = 2 phosphate + H(+). In Bacillus cereus (strain AH187), this protein is Probable manganese-dependent inorganic pyrophosphatase.